A 151-amino-acid polypeptide reads, in one-letter code: Ribosome maturation factor RimP (151 aa).

This sequence belongs to the RimP family.

The protein localises to the cytoplasm. In terms of biological role, required for maturation of 30S ribosomal subunits. The polypeptide is Ribosome maturation factor RimP (Vibrio cholerae serotype O1 (strain ATCC 39541 / Classical Ogawa 395 / O395)).